Consider the following 270-residue polypeptide: A-type potassium channel modulatory protein KCNIP2 (270 aa).

A compositionally biased stretch (basic and acidic residues) spans 1–17; that stretch reads MRGQGRKESLSDSRDLD. The disordered stretch occupies residues 1-32; sequence MRGQGRKESLSDSRDLDGSYDQLTGHPPGPTK. Residue S9 is modified to Phosphoserine. S-palmitoyl cysteine attachment occurs at residues C45 and C46. The EF-hand 1; degenerate domain maps to 81–137; that stretch reads FELSTVCHRPEGLEQLQEQTKFTRKELQVLYRGFKNECPSGIVNEENFKQIYSQFFP. 3 EF-hand domains span residues 140 to 175, 176 to 211, and 224 to 259; these read DSST…ILRG, TVDD…IYDM, and APRE…DENI. Ca(2+) contacts are provided by D153, N155, D157, S159, D164, D189, N191, D193, C195, E200, D237, N239, D241, and E248. The interval 257 to 270 is interaction with KCND2; the sequence is ENIMRSMQLFDNVI.

The protein belongs to the recoverin family. Component of heteromultimeric potassium channels. Identified in potassium channel complexes containing KCND1, KCND2, KCND3, KCNIP1, KCNIP2, KCNIP3, KCNIP4, DPP6 and DPP10. The KCND2-KCNIP2 channel complex contains four KCND2 and four KCNIP2 subunits. Interacts with KCND2. Probably part of a complex consisting of KCNIP1, KCNIP2 isoform 3 and KCND2. At least isoform 2 and isoform 3 can self-associate to form homodimers and homotetramers. Isoform 3 interacts with KCNIP1 in a calcium-dependent manner. Interacts with KCND3; each KCNIP2 monomer interacts with two adjacent KCND3 subunits, through both the N-terminal inactivation ball of a KCND3 subunit and a C-terminal helix from the adjacent KCND3 subunit, clamping them together; this interaction modulates the channel gating kinetics. Palmitoylated. Palmitoylation enhances association with the plasma membrane. As to expression, expressed in brain. Colocalizes with KCND2 in excitatory neurons including cortical and hippocampal CA1 pyramidal cells. Isoform 3 is expressed in heart and in umbilical vein endothelial cells. Not expressed in fetal heart.

Its subcellular location is the cell membrane. Functionally, regulatory subunit of Kv4/D (Shal)-type voltage-gated rapidly inactivating A-type potassium channels. Modulates channel density, inactivation kinetics and rate of recovery from inactivation in a calcium-dependent and isoform-specific manner. Involved in KCND2 and KCND3 trafficking to the cell surface. May be required for the expression of I(To) currents in the heart. In Homo sapiens (Human), this protein is A-type potassium channel modulatory protein KCNIP2.